Here is a 94-residue protein sequence, read N- to C-terminus: Co-chaperonin GroES (94 aa).

It belongs to the GroES chaperonin family. As to quaternary structure, heptamer of 7 subunits arranged in a ring. Interacts with the chaperonin GroEL.

The protein localises to the cytoplasm. In terms of biological role, together with the chaperonin GroEL, plays an essential role in assisting protein folding. The GroEL-GroES system forms a nano-cage that allows encapsulation of the non-native substrate proteins and provides a physical environment optimized to promote and accelerate protein folding. GroES binds to the apical surface of the GroEL ring, thereby capping the opening of the GroEL channel. The polypeptide is Co-chaperonin GroES (Listeria welshimeri serovar 6b (strain ATCC 35897 / DSM 20650 / CCUG 15529 / CIP 8149 / NCTC 11857 / SLCC 5334 / V8)).